Consider the following 595-residue polypeptide: Beta-hexosaminidase 1 (595 aa).

Positions 1–20 (MRFAYLATLAGSLLAGLAQA) are cleaved as a signal peptide. N-linked (GlcNAc...) asparagine glycosylation is present at Asn-313.

It belongs to the glycosyl hydrolase 20 family.

It carries out the reaction Hydrolysis of terminal non-reducing N-acetyl-D-hexosamine residues in N-acetyl-beta-D-hexosaminides.. Functionally, beta-hexosaminidase that shows a broad substrate specificity. This Coccidioides posadasii (strain RMSCC 757 / Silveira) (Valley fever fungus) protein is Beta-hexosaminidase 1.